The sequence spans 454 residues: PC-esterase domain-containing protein 1A (454 aa).

It belongs to the PC-esterase family.

This Homo sapiens (Human) protein is PC-esterase domain-containing protein 1A (PCED1A).